Reading from the N-terminus, the 380-residue chain is MAAAVHGALKAVGEDFYRDAIEHCRSYNARLSAERSTRLPFLDAQTGVAQSDCYIWMERSHRGPGLSPGQIYSYPARCWRKKRRLNILEDPRLRPLCDAPQKKELGSAVAEGAVLEALLCAEPPKEPKEEEALLDCQKPPPGDFAHDAEGDEMEDDAPRRKNKAKGKTYGLGAVRKRQDAAALEDRDKPYVCDICGKRYKNRPGLSYHYTHTHLAEEEGEESAERHPLPFQRRNHHKQFYKELNWVPESQRRHAAAAGRRSEGPCDFCVGGAVRRAALGHEEMIACADCGRAGHPSCLQFTLAMAAAARSYRWQCIECKNCSLCGSAENDEQLLFCDDCDRGYHMYCISPPVAEPPEGTWSCHLCLRQLKDKAAAFITLT.

The segment at Ala132 to Ala164 is disordered. The segment at Tyr190 to His213 adopts a C2H2-type zinc-finger fold. PHD-type zinc fingers lie at residues Glu262–Cys321 and Cys318–Gln368. Cys265, Cys268, Cys286, Cys289, His294, Cys297, Cys315, Cys318, Cys321, Cys324, Cys336, Cys339, His344, Cys347, Cys362, and Cys365 together coordinate Zn(2+).

The protein belongs to the requiem/DPF family. As to quaternary structure, component of neuron-specific chromatin remodeling complex (nBAF complex), a subfamily of ATP-dependent SWI/SNF chromatin remodeling complexes.

Its subcellular location is the cytoplasm. The protein resides in the nucleus. May have an important role in developing neurons by participating in regulation of cell survival, possibly as a neurospecific transcription factor. Belongs to the neuron-specific chromatin remodeling complex (nBAF complex) and plays a role in neural development. This is Zinc finger protein neuro-d4 from Gallus gallus (Chicken).